The primary structure comprises 290 residues: ATP synthase subunit a (290 aa).

Transmembrane regions (helical) follow at residues 44–64, 104–124, 161–181, 194–214, 233–253, and 260–280; these read AFHVDTLGWSVALGVIFILLF, VIAPLALTIFVWVFLMNAIDL, LSVFALIIFYSIKVKGIGGFI, ILVQALLIPVNFLLEFVTLVA, VFILIAVMFGSGLLWLSGMGV, and AVFHILIITLQAFIFMMLTIV.

This sequence belongs to the ATPase A chain family. In terms of assembly, F-type ATPases have 2 components, CF(1) - the catalytic core - and CF(0) - the membrane proton channel. CF(1) has five subunits: alpha(3), beta(3), gamma(1), delta(1), epsilon(1). CF(0) has three main subunits: a(1), b(2) and c(9-12). The alpha and beta chains form an alternating ring which encloses part of the gamma chain. CF(1) is attached to CF(0) by a central stalk formed by the gamma and epsilon chains, while a peripheral stalk is formed by the delta and b chains.

The protein localises to the cell inner membrane. In terms of biological role, key component of the proton channel; it plays a direct role in the translocation of protons across the membrane. This chain is ATP synthase subunit a, found in Pseudomonas fluorescens (strain ATCC BAA-477 / NRRL B-23932 / Pf-5).